Reading from the N-terminus, the 180-residue chain is Protein SPMIP9 (180 aa).

In terms of assembly, microtubule inner protein component of sperm flagellar doublet microtubules.

Its subcellular location is the nucleus. It localises to the cytoplasm. The protein resides in the cytoskeleton. The protein localises to the flagellum axoneme. Its function is as follows. Microtubule inner protein (MIP) part of the dynein-decorated doublet microtubules (DMTs) in flagella axoneme. This is Protein SPMIP9 (SPMIP9) from Bos taurus (Bovine).